Here is a 324-residue protein sequence, read N- to C-terminus: Phospho-N-acetylmuramoyl-pentapeptide-transferase (324 aa).

A run of 9 helical transmembrane segments spans residues 13–33 (VLSA…IFIP), 59–79 (PTMG…IIGY), 85–105 (GMVV…DDIL), 121–141 (MILL…NIGT), 143–163 (IIIP…PLVV), 179–199 (IDGL…IVGF), 201–221 (TGHY…LGFL), 243–263 (AIAT…VGGI), and 303–323 (VKLV…GFIA).

Belongs to the glycosyltransferase 4 family. MraY subfamily. It depends on Mg(2+) as a cofactor.

It is found in the cell membrane. The catalysed reaction is UDP-N-acetyl-alpha-D-muramoyl-L-alanyl-gamma-D-glutamyl-meso-2,6-diaminopimeloyl-D-alanyl-D-alanine + di-trans,octa-cis-undecaprenyl phosphate = di-trans,octa-cis-undecaprenyl diphospho-N-acetyl-alpha-D-muramoyl-L-alanyl-D-glutamyl-meso-2,6-diaminopimeloyl-D-alanyl-D-alanine + UMP. It participates in cell wall biogenesis; peptidoglycan biosynthesis. Functionally, catalyzes the initial step of the lipid cycle reactions in the biosynthesis of the cell wall peptidoglycan: transfers peptidoglycan precursor phospho-MurNAc-pentapeptide from UDP-MurNAc-pentapeptide onto the lipid carrier undecaprenyl phosphate, yielding undecaprenyl-pyrophosphoryl-MurNAc-pentapeptide, known as lipid I. The sequence is that of Phospho-N-acetylmuramoyl-pentapeptide-transferase from Clostridium botulinum (strain Alaska E43 / Type E3).